A 248-amino-acid chain; its full sequence is Triosephosphate isomerase (248 aa).

Residue 9–11 (NWK) coordinates substrate. His-94 functions as the Electrophile in the catalytic mechanism. Catalysis depends on Glu-166, which acts as the Proton acceptor. Substrate-binding positions include Gly-172, Ser-212, and 233-234 (GG).

This sequence belongs to the triosephosphate isomerase family. Homodimer.

The protein localises to the cytoplasm. It catalyses the reaction D-glyceraldehyde 3-phosphate = dihydroxyacetone phosphate. It functions in the pathway carbohydrate biosynthesis; gluconeogenesis. Its pathway is carbohydrate degradation; glycolysis; D-glyceraldehyde 3-phosphate from glycerone phosphate: step 1/1. In terms of biological role, involved in the gluconeogenesis. Catalyzes stereospecifically the conversion of dihydroxyacetone phosphate (DHAP) to D-glyceraldehyde-3-phosphate (G3P). The chain is Triosephosphate isomerase from Clostridium beijerinckii (strain ATCC 51743 / NCIMB 8052) (Clostridium acetobutylicum).